The primary structure comprises 316 residues: Very-long-chain 3-oxooacyl-coA reductase let-767 (316 aa).

NADP(+) contacts are provided by residues 52–80 and Asp106; that span reads ITGA…VSRT. Ser189 serves as a coordination point for substrate. Residue Tyr202 is the Proton acceptor of the active site. Residue Lys206 coordinates NADP(+).

Belongs to the short-chain dehydrogenases/reductases (SDR) family. 17-beta-HSD 3 subfamily.

It catalyses the reaction a very-long-chain (3R)-3-hydroxyacyl-CoA + NADP(+) = a very-long-chain 3-oxoacyl-CoA + NADPH + H(+). It participates in lipid metabolism; fatty acid biosynthesis. In terms of biological role, required for branched chain fatty acid synthesis. Catalyzes the reduction of the 3-ketoacyl-CoA intermediate that is formed in each cycle of fatty acid elongation. Very long-chain fatty acids (VLCFAs) serve as precursors for ceramide and sphingolipids. May also be required for sterol hormone production. This chain is Very-long-chain 3-oxooacyl-coA reductase let-767, found in Caenorhabditis briggsae.